We begin with the raw amino-acid sequence, 473 residues long: Hyaluronidase-2 (473 aa).

The N-terminal stretch at 1 to 20 (MRAGPGPTVTLALVLAVSWA) is a signal peptide. Disulfide bonds link Cys47-Cys340 and Cys211-Cys227. Residues Asn74 and Asn103 are each glycosylated (N-linked (GlcNAc...) asparagine). The active-site Proton donor is the Glu135. Asn357 carries an N-linked (GlcNAc...) asparagine glycan. Residues 361–439 (ATQYCSRAQC…YLGWSGEQCQ (79 aa)) form the EGF-like domain. 3 cysteine pairs are disulfide-bonded: Cys365–Cys376, Cys370–Cys427, and Cys429–Cys438. Gly448 is lipidated: GPI-anchor amidated glycine. A propeptide spans 449–473 (ASEAWAGSHLTSLLALAALAFTWTL) (removed in mature form).

It belongs to the glycosyl hydrolase 56 family. In terms of assembly, interacts with MST1R. Widely expressed (at protein level).

The protein resides in the cell membrane. It catalyses the reaction Random hydrolysis of (1-&gt;4)-linkages between N-acetyl-beta-D-glucosamine and D-glucuronate residues in hyaluronate.. Its function is as follows. Catalyzes hyaluronan degradation into small fragments that are endocytosed and degraded in lysosomes by HYAL1 and exoglycosidases. Essential for the breakdown of extracellular matrix hyaluronan. The polypeptide is Hyaluronidase-2 (HYAL2) (Homo sapiens (Human)).